Reading from the N-terminus, the 371-residue chain is Germination protease (371 aa).

The propeptide occupies 1–16 (MEKQKLDLSAYQIRTD).

Belongs to the peptidase A25 family. In terms of assembly, homotetramer. In terms of processing, autoproteolytically processed. The inactive tetrameric zymogen termed p46 autoprocesses to a smaller form termed p41, which is active only during spore germination.

The catalysed reaction is Endopeptidase action with P4 Glu or Asp, P1 preferably Glu &gt; Asp, P1' hydrophobic and P2' Ala.. Functionally, initiates the rapid degradation of small, acid-soluble proteins during spore germination. This Bacillus pumilus (strain SAFR-032) protein is Germination protease.